Here is a 336-residue protein sequence, read N- to C-terminus: MLYLVLSKLVWIVLLAIVLILCVAYLTYAERKVIAATQLRVGPDLVGPFGLLQPIADAIKVLLKEIIIPNAASPKLFLFAPVIIFVLALVGWAVIPFGTSEIDGVEVPTVIANVNLGVMYLLGVAALEVYGTIIAGWASKSSYSFLGALRSASQMISYEIVIAPVVMTVILLTGSLNLAEIVVIKHSLPYWVDILMLPMTFIFFVSILAETNRHPFDLPEAEAELVSGYNVEYSSIPFALFFLGEYANMILSSSIMATLFLGGWYPPINWWGLSIVPGFIWFILKIVFVLFCFLIVRATLPRYRYDQLMRLCWKVFLPVTLLWIVVIGGLVAFNIV.

8 helical membrane-spanning segments follow: residues 9 to 29 (LVWI…LTYA), 77 to 97 (FLFA…VIPF), 116 to 136 (LGVM…IIAG), 156 to 176 (ISYE…TGSL), 188 to 208 (LPYW…VSIL), 236 to 256 (IPFA…SSIM), 275 to 295 (IVPG…CFLI), and 315 to 335 (VFLP…AFNI).

This sequence belongs to the complex I subunit 1 family. In terms of assembly, NDH-1 is composed of 14 different subunits. Subunits NuoA, H, J, K, L, M, N constitute the membrane sector of the complex.

The protein localises to the cell inner membrane. It carries out the reaction a quinone + NADH + 5 H(+)(in) = a quinol + NAD(+) + 4 H(+)(out). In terms of biological role, NDH-1 shuttles electrons from NADH, via FMN and iron-sulfur (Fe-S) centers, to quinones in the respiratory chain. The immediate electron acceptor for the enzyme in this species is believed to be ubiquinone. Couples the redox reaction to proton translocation (for every two electrons transferred, four hydrogen ions are translocated across the cytoplasmic membrane), and thus conserves the redox energy in a proton gradient. This subunit may bind ubiquinone. This is NADH-quinone oxidoreductase subunit H from Neorickettsia sennetsu (strain ATCC VR-367 / Miyayama) (Ehrlichia sennetsu).